Consider the following 194-residue polypeptide: ATP-dependent Clp protease proteolytic subunit 3 (194 aa).

Ser-96 serves as the catalytic Nucleophile. His-121 is a catalytic residue.

It belongs to the peptidase S14 family. As to quaternary structure, fourteen ClpP subunits assemble into 2 heptameric rings which stack back to back to give a disk-like structure with a central cavity, resembling the structure of eukaryotic proteasomes.

It localises to the cytoplasm. The enzyme catalyses Hydrolysis of proteins to small peptides in the presence of ATP and magnesium. alpha-casein is the usual test substrate. In the absence of ATP, only oligopeptides shorter than five residues are hydrolyzed (such as succinyl-Leu-Tyr-|-NHMec, and Leu-Tyr-Leu-|-Tyr-Trp, in which cleavage of the -Tyr-|-Leu- and -Tyr-|-Trp bonds also occurs).. In terms of biological role, cleaves peptides in various proteins in a process that requires ATP hydrolysis. Has a chymotrypsin-like activity. Plays a major role in the degradation of misfolded proteins. The protein is ATP-dependent Clp protease proteolytic subunit 3 of Rhizobium johnstonii (strain DSM 114642 / LMG 32736 / 3841) (Rhizobium leguminosarum bv. viciae).